Consider the following 341-residue polypeptide: Fructose-1,6-bisphosphatase, cytosolic (341 aa).

Residues Glu-71, Glu-100, Asp-121, Leu-123, and Asp-124 each coordinate Mg(2+). Substrate contacts are provided by residues 124–127 (DGSS), Asn-215, Tyr-247, Tyr-267, and Lys-277. Glu-283 lines the Mg(2+) pocket.

This sequence belongs to the FBPase class 1 family. Mg(2+) serves as cofactor.

It is found in the cytoplasm. It catalyses the reaction beta-D-fructose 1,6-bisphosphate + H2O = beta-D-fructose 6-phosphate + phosphate. This Spinacia oleracea (Spinach) protein is Fructose-1,6-bisphosphatase, cytosolic.